Reading from the N-terminus, the 274-residue chain is Large ribosomal subunit protein uL2cz/uL2cy (274 aa).

The segment covering 1–15 (MAINLYKTSTPSTRN) has biased composition (polar residues). Disordered stretches follow at residues 1-22 (MAIN…DSQV) and 225-274 (PVDH…RRSK).

This sequence belongs to the universal ribosomal protein uL2 family. As to quaternary structure, part of the 50S ribosomal subunit.

The protein resides in the plastid. It is found in the chloroplast. The protein is Large ribosomal subunit protein uL2cz/uL2cy (rpl2-A) of Lobularia maritima (Sweet alyssum).